Consider the following 257-residue polypeptide: Indole-3-glycerol phosphate synthase (257 aa).

Belongs to the TrpC family.

It carries out the reaction 1-(2-carboxyphenylamino)-1-deoxy-D-ribulose 5-phosphate + H(+) = (1S,2R)-1-C-(indol-3-yl)glycerol 3-phosphate + CO2 + H2O. It participates in amino-acid biosynthesis; L-tryptophan biosynthesis; L-tryptophan from chorismate: step 4/5. The polypeptide is Indole-3-glycerol phosphate synthase (Chlorobium chlorochromatii (strain CaD3)).